Here is a 535-residue protein sequence, read N- to C-terminus: Mannan polymerase I complex VAN1 subunit (535 aa).

Residues 1–64 (MGMFFNLRSN…STPSKFQLTV (64 aa)) are Cytoplasmic-facing. The tract at residues 22–48 (LPISRNGSSNNIKDKRSEHNSNSLKGK) is disordered. Ser25 carries the phosphoserine modification. The chain crosses the membrane as a helical; Signal-anchor for type II membrane protein span at residues 65-81 (SITSLIIIAVLSLYLFI). Residues 82–535 (SFLSGMGIGV…REREKRRQSE (454 aa)) lie on the Lumenal side of the membrane. N-linked (GlcNAc...) asparagine glycans are attached at residues Asn215 and Asn251.

It belongs to the ANP1/MMN9/VAN1 family. In terms of assembly, component of the M-Pol I complex which contains MNN9 and VAN1. Post-translationally, glycosylated.

The protein resides in the endoplasmic reticulum membrane. It is found in the golgi apparatus membrane. Functionally, involved in regulation of the phosphorylation of a number of proteins, some of which appear to be important in cell growth control. The M-Pol I complex possesses alpha-1,6-mannosyltransferase activity and is probably involved in the elongation of the mannan backbone of N-linked glycans on cell wall and periplasmic proteins. This Saccharomyces cerevisiae (strain ATCC 204508 / S288c) (Baker's yeast) protein is Mannan polymerase I complex VAN1 subunit (VAN1).